The sequence spans 905 residues: Protein translocase subunit SecA (905 aa).

ATP contacts are provided by residues glutamine 86, 104-108 (GEGKT), and aspartate 499. Cysteine 890, cysteine 892, cysteine 901, and histidine 902 together coordinate Zn(2+).

This sequence belongs to the SecA family. As to quaternary structure, monomer and homodimer. Part of the essential Sec protein translocation apparatus which comprises SecA, SecYEG and auxiliary proteins SecDF-YajC and YidC. It depends on Zn(2+) as a cofactor.

Its subcellular location is the cell inner membrane. It localises to the cytoplasm. The enzyme catalyses ATP + H2O + cellular proteinSide 1 = ADP + phosphate + cellular proteinSide 2.. Functionally, part of the Sec protein translocase complex. Interacts with the SecYEG preprotein conducting channel. Has a central role in coupling the hydrolysis of ATP to the transfer of proteins into and across the cell membrane, serving both as a receptor for the preprotein-SecB complex and as an ATP-driven molecular motor driving the stepwise translocation of polypeptide chains across the membrane. The chain is Protein translocase subunit SecA from Rickettsia typhi (strain ATCC VR-144 / Wilmington).